A 70-amino-acid chain; its full sequence is Brevinin-1Vb (70 aa).

The first 22 residues, methionine 1–cysteine 22, serve as a signal peptide directing secretion. The propeptide occupies glutamate 23–glutamate 44. Cysteine 64 and cysteine 70 form a disulfide bridge.

In terms of tissue distribution, expressed by the skin glands.

The protein resides in the secreted. Antimicrobial peptide. The polypeptide is Brevinin-1Vb (Odorrana versabilis (Chinese bamboo leaf odorous frog)).